The primary structure comprises 109 residues: MTDLEFMDHAEKLLLAVERSCDRINETTDADLDSQRSGGMLTLVFPNRSQIVINLQKPLHEVWMAARSGGYHYRFDGHAWQDSKGAGEFFACLGRDATVQSGRPLQFAA.

The protein belongs to the frataxin family.

Its function is as follows. Involved in iron-sulfur (Fe-S) cluster assembly. May act as a regulator of Fe-S biogenesis. This Verminephrobacter eiseniae (strain EF01-2) protein is Iron-sulfur cluster assembly protein CyaY.